A 215-amino-acid chain; its full sequence is MKYQLTALEARVIGCLLEKQVTTPEQYPLSVNGVVTACNQKTNREPVMNLSESEVQEQLDNLVKRHYLRTVSGFGNRVTKYEQRFCNSEFGDLKLSAAEVALITTLLLRGAQTPGELRSRAARMYEFSDMAEVESTLEQLANREDGPFVVRLAREPGKRESRYMHLFSGEVEDQPAVTAMSNMVDGDLQTRVEALEIEVAELKQRLDSLLAHLGD.

N6-acetyllysine is present on Lys-80.

It belongs to the UPF0502 family.

This Shigella flexneri serotype 5b (strain 8401) protein is UPF0502 protein YceH.